The sequence spans 261 residues: Enolase-phosphatase E1 (261 aa).

Residues D16 and E18 each contribute to the Mg(2+) site. Substrate-binding positions include 153–154 (SS) and K187. D212 serves as a coordination point for Mg(2+).

This sequence belongs to the HAD-like hydrolase superfamily. MasA/MtnC family. In terms of assembly, monomer. The cofactor is Mg(2+).

It localises to the cytoplasm. Its subcellular location is the nucleus. It carries out the reaction 5-methylsulfanyl-2,3-dioxopentyl phosphate + H2O = 1,2-dihydroxy-5-(methylsulfanyl)pent-1-en-3-one + phosphate. The protein operates within amino-acid biosynthesis; L-methionine biosynthesis via salvage pathway; L-methionine from S-methyl-5-thio-alpha-D-ribose 1-phosphate: step 3/6. It participates in amino-acid biosynthesis; L-methionine biosynthesis via salvage pathway; L-methionine from S-methyl-5-thio-alpha-D-ribose 1-phosphate: step 4/6. Bifunctional enzyme that catalyzes the enolization of 2,3-diketo-5-methylthiopentyl-1-phosphate (DK-MTP-1-P) into the intermediate 2-hydroxy-3-keto-5-methylthiopentenyl-1-phosphate (HK-MTPenyl-1-P), which is then dephosphorylated to form the acireductone 1,2-dihydroxy-3-keto-5-methylthiopentene (DHK-MTPene). The sequence is that of Enolase-phosphatase E1 (enoph1) from Salmo salar (Atlantic salmon).